Here is an 834-residue protein sequence, read N- to C-terminus: MQPSSPNATNYLADNIQISSANLSQTEMVVGRDSADYTAMHSINVGVGNSFLRGDTDIPQESGHSFETPSNMSFTAGQWDTESLPPVDTPDALNKAAGRIRSLLRRMDHETVAYEDMQRNLHYAARVLEAVFIDESREGCNGNCKNLNCSRHSHGRDDQQQDNNNSNRSCSLQEASPGGAGAGVTPGADNQDSIESRTKGVSQAPQTHSGPTGPPSNTSSETIAQPAPKLQPALETVRESVMEESPSKDPGDKGPPPPASTSTLTSQTTTSSSATAEPSAKAAESQAGSAGSSGSCSNPAAVHRQRRLRTPTWARSMSTNKTRLADEDDELSEVQPDAVPPEVREWLASTFTRQMATSRRKSDEKPKFRSVAHAIRAGIFVDRMYRRVSSSALTAFPPDVVRLLKNLDDWTFDVFALTEAASGQVVKYVAYELFNRYGSIHKFKIAPGILEAFLHRVEEGYCRYRNPYHNNLHAVDVMQTIHYCLCNTGLMNWLTDLEIFASLLAALLHDYEHTGTTNNFHVMSGSETALLYNDRAVLENHHASASFRLLREDEYNILSHLSREEFRELRGLVIEMVLGTDMTNHFQQMKAMRQLLTLQEATIDKQKVLSLVLHCCDISHPAKQWGVHHRWTMLLLEEFFRQGDLEKELGLPFSPLCDRNNTLVAESQICFIDFIVEPSMGVMSDMLELILAPIAPMNKSKPATLVEHETTANSTTNSAIVIPNSGITPSMDKPRDHRTEAKTTAAECLARKSVTGTTASKFNIPKPWLTCLVENKRIWKEQAVKDAEARALATAAEEAAAAAAAEAEESKPETETADGEQSEPAAEPADGAAA.

Residues 152–338 are disordered; that stretch reads HSHGRDDQQQ…DELSEVQPDA (187 aa). Low complexity predominate over residues 207-222; sequence THSGPTGPPSNTSSET. The span at 236–252 shows a compositional bias: basic and acidic residues; that stretch reads TVRESVMEESPSKDPGD. Over residues 260-301 the composition is skewed to low complexity; it reads STSTLTSQTTTSSSATAEPSAKAAESQAGSAGSSGSCSNPAA. Residues 313-322 are compositionally biased toward polar residues; sequence WARSMSTNKT. A calmodulin-binding region spans residues 364 to 387; the sequence is EKPKFRSVAHAIRAGIFVDRMYRR. The region spanning 392–786 is the PDEase domain; the sequence is ALTAFPPDVV…RIWKEQAVKD (395 aa). The active-site Proton donor is the H469. H473, H509, D510, and D617 together coordinate Zn(2+). Residue D510 coordinates Mg(2+). Disordered stretches follow at residues 720–744 and 797–834; these read IVIPNSGITPSMDKPRDHRTEAKTT and EEAAAAAAAEAEESKPETETADGEQSEPAAEPADGAAA. The span at 732–741 shows a compositional bias: basic and acidic residues; that stretch reads DKPRDHRTEA. Residues 823–834 are compositionally biased toward low complexity; that stretch reads EPAAEPADGAAA.

Belongs to the cyclic nucleotide phosphodiesterase family. PDE1 subfamily. Requires Zn(2+) as cofactor. It depends on Mg(2+) as a cofactor. Expressed in the head (at protein level). Expressed in Malpighian tubules. Expressed in neurons in the brain and ventral ganglia with male flies having higher levels of expression in the abdominal ganglia compared to female flies.

It carries out the reaction a nucleoside 3',5'-cyclic phosphate + H2O = a nucleoside 5'-phosphate + H(+). The catalysed reaction is 3',5'-cyclic GMP + H2O = GMP + H(+). It catalyses the reaction 3',5'-cyclic AMP + H2O = AMP + H(+). With respect to regulation, type I PDE are activated by the binding of calmodulin in the presence of Ca(2+). Inhibited by zaprinast and sildenafil. Cyclic nucleotide phosphodiesterase with a dual specificity for the second messengers cAMP and cGMP, which are key regulators of many important physiological processes. Required for male fertility and male mating behavior. The polypeptide is Dual specificity calcium/calmodulin-dependent 3',5'-cyclic nucleotide phosphodiesterase 1 (Drosophila melanogaster (Fruit fly)).